The sequence spans 463 residues: MKSAVETLNPTRVRLTVEVPFEELKDSLDAAYKKINQQVTVKGFRKGKIPARVIDQRFGRGAVLEEAVNDALPKFYTEAVNEAELNPLGQPEVDITELKDGETLNFTAEVDVRPTIEIPDYSGIEVEVDAVEVSDEDVEKAVTELRERFASTSPVERAAEDGDVVTLDLEAKVDGEVLEDGVAEGVSYTIGSGELLDGIDDAVKGLEAGGETTFTSELKGGSAAGKEAEVTVKVSQVAARELPELDDDFAQLASEFDTLEELKADSRKRLENMKQYDQATQAQERVLEKLLELAEVPVPEKLLEDEINTRKHNLEHHQLGQMGLDLEKYLEIQGKTVEEFDAETKEAAVKGIKTQFVLDELVNKEKLNVNQEELTEHLMRRAASSGMSPDQFAQAVVEGGQVPMLVGEVARGKALAVVVEAATVKDTNGEIVDLDDEDETESTPETTEAAEAAEESTEDKPEA.

One can recognise a PPIase FKBP-type domain in the interval 162–243 (GDVVTLDLEA…VSQVAARELP (82 aa)). Residues 427–463 (TNGEIVDLDDEDETESTPETTEAAEAAEESTEDKPEA) form a disordered region. A compositionally biased stretch (acidic residues) spans 432–442 (VDLDDEDETES).

Belongs to the FKBP-type PPIase family. Tig subfamily.

It localises to the cytoplasm. It carries out the reaction [protein]-peptidylproline (omega=180) = [protein]-peptidylproline (omega=0). In terms of biological role, involved in protein export. Acts as a chaperone by maintaining the newly synthesized protein in an open conformation. Functions as a peptidyl-prolyl cis-trans isomerase. The sequence is that of Trigger factor from Streptomyces avermitilis (strain ATCC 31267 / DSM 46492 / JCM 5070 / NBRC 14893 / NCIMB 12804 / NRRL 8165 / MA-4680).